Consider the following 497-residue polypeptide: Cytosol aminopeptidase (497 aa).

Lys267 and Asp272 together coordinate Mn(2+). Residue Lys279 is part of the active site. Mn(2+) is bound by residues Asp290, Asp349, and Glu351. Arg353 is an active-site residue.

This sequence belongs to the peptidase M17 family. It depends on Mn(2+) as a cofactor.

Its subcellular location is the cytoplasm. It carries out the reaction Release of an N-terminal amino acid, Xaa-|-Yaa-, in which Xaa is preferably Leu, but may be other amino acids including Pro although not Arg or Lys, and Yaa may be Pro. Amino acid amides and methyl esters are also readily hydrolyzed, but rates on arylamides are exceedingly low.. The enzyme catalyses Release of an N-terminal amino acid, preferentially leucine, but not glutamic or aspartic acids.. Its function is as follows. Presumably involved in the processing and regular turnover of intracellular proteins. Catalyzes the removal of unsubstituted N-terminal amino acids from various peptides. This Pseudomonas putida (Arthrobacter siderocapsulatus) protein is Cytosol aminopeptidase (pepA).